The following is a 430-amino-acid chain: Adenylosuccinate synthetase (430 aa).

GTP contacts are provided by residues 12–18 (GDEGKGK) and 40–42 (GHT). The active-site Proton acceptor is D13. Mg(2+) is bound by residues D13 and G40. IMP is bound by residues 13–16 (DEGK), 38–41 (NAGH), T128, R142, Q223, T238, and R302. H41 functions as the Proton donor in the catalytic mechanism. 298-304 (TTTGRPR) is a binding site for substrate. Residues R304, 330-332 (SID), and 412-414 (SVG) contribute to the GTP site.

This sequence belongs to the adenylosuccinate synthetase family. Homodimer. The cofactor is Mg(2+).

It localises to the cytoplasm. The catalysed reaction is IMP + L-aspartate + GTP = N(6)-(1,2-dicarboxyethyl)-AMP + GDP + phosphate + 2 H(+). It functions in the pathway purine metabolism; AMP biosynthesis via de novo pathway; AMP from IMP: step 1/2. In terms of biological role, plays an important role in the de novo pathway of purine nucleotide biosynthesis. Catalyzes the first committed step in the biosynthesis of AMP from IMP. The sequence is that of Adenylosuccinate synthetase from Streptococcus pyogenes serotype M12 (strain MGAS9429).